The sequence spans 176 residues: Large ribosomal subunit protein uL10 (176 aa).

This sequence belongs to the universal ribosomal protein uL10 family. In terms of assembly, part of the ribosomal stalk of the 50S ribosomal subunit. The N-terminus interacts with L11 and the large rRNA to form the base of the stalk. The C-terminus forms an elongated spine to which L12 dimers bind in a sequential fashion forming a multimeric L10(L12)X complex.

In terms of biological role, forms part of the ribosomal stalk, playing a central role in the interaction of the ribosome with GTP-bound translation factors. This is Large ribosomal subunit protein uL10 from Sorangium cellulosum (strain So ce56) (Polyangium cellulosum (strain So ce56)).